The chain runs to 347 residues: Succinylglutamate desuccinylase (347 aa).

Zn(2+)-binding residues include His64, Glu67, and His159. Glu222 is an active-site residue.

It belongs to the AspA/AstE family. Succinylglutamate desuccinylase subfamily. It depends on Zn(2+) as a cofactor.

It carries out the reaction N-succinyl-L-glutamate + H2O = L-glutamate + succinate. It functions in the pathway amino-acid degradation; L-arginine degradation via AST pathway; L-glutamate and succinate from L-arginine: step 5/5. Functionally, transforms N(2)-succinylglutamate into succinate and glutamate. In Burkholderia cenocepacia (strain ATCC BAA-245 / DSM 16553 / LMG 16656 / NCTC 13227 / J2315 / CF5610) (Burkholderia cepacia (strain J2315)), this protein is Succinylglutamate desuccinylase.